Reading from the N-terminus, the 425-residue chain is UBX domain-containing protein 4 (425 aa).

The tract at residues 224–257 (TPIPSLPSTPSSYQNLPSQSLTGESLPTVSNQEK) is disordered. Positions 236–254 (YQNLPSQSLTGESLPTVSN) are enriched in polar residues. Serine 338 is modified (phosphoserine). Positions 341 to 390 (PLPSSAIVKFDFGNGKSIVHEFSKDDNIETLRAFVASHLSPEESTSFQLT) constitute a UBX domain.

The protein resides in the cytoplasm. It localises to the nucleus. In terms of biological role, involved in CDC48-dependent protein degradation through the ubiquitin/proteasome pathway. In Schizosaccharomyces pombe (strain 972 / ATCC 24843) (Fission yeast), this protein is UBX domain-containing protein 4 (ubx4).